A 761-amino-acid chain; its full sequence is Zinc finger protein 711 (761 aa).

5 consecutive C2H2-type zinc fingers follow at residues 383 to 408 (YPCH…HPDH), 414 to 436 (YQCT…LESH), 476 to 499 (HKCK…LAVH), 505 to 527 (HVCV…MRTH), and 533 to 556 (FHCQ…KSKH). Residues 562-584 (FKCGHCPQAFADDKELQRHAEIF) form a C2H2-type 6; atypical zinc finger. 3 residues coordinate Zn(2+): Cys-564, Cys-567, and His-580. 6 consecutive C2H2-type zinc fingers follow at residues 590 to 613 (HQCP…ISVH), 619 to 641 (HKCD…SETH), 647 to 670 (HQCR…LSVH), 676 to 698 (FKCK…MKTH), 704 to 727 (YQCQ…ISIH), and 733 to 755 (HRCD…IMRH).

This sequence belongs to the krueppel C2H2-type zinc-finger protein family. Present in ovary and brain but not in other tissues (at protein level).

The protein localises to the nucleus. It is found in the cytoplasm. Functionally, transcription regulator required for brain development. Probably acts as a transcription factor that binds to the promoter of target genes, leading to activate their expression. The protein is Zinc finger protein 711 (znf711) of Danio rerio (Zebrafish).